A 274-amino-acid polypeptide reads, in one-letter code: Nitrate import ATP-binding protein NrtD (274 aa).

The 234-residue stretch at 17–250 folds into the ABC transporter domain; the sequence is LHFDCVGKTF…RPREREAVVE (234 aa). 53–60 is a binding site for ATP; the sequence is GHSGCGKS.

This sequence belongs to the ABC transporter superfamily. Nitrate/nitrite/cyanate uptake transporter (NitT) (TC 3.A.1.16) family. As to quaternary structure, the complex is composed of two ATP-binding proteins (NrtC and NrtD), two transmembrane proteins (NrtB) and a solute-binding protein (NrtA).

Its subcellular location is the cell inner membrane. It carries out the reaction nitrate(out) + ATP + H2O = nitrate(in) + ADP + phosphate + H(+). Functionally, part of the ABC transporter complex NrtABCD involved in nitrate uptake. The complex is probably also involved in nitrite transport. Probably responsible for energy coupling to the transport system. This chain is Nitrate import ATP-binding protein NrtD, found in Synechococcus elongatus (strain ATCC 33912 / PCC 7942 / FACHB-805) (Anacystis nidulans R2).